The primary structure comprises 292 residues: GTP cyclohydrolase FolE2 (292 aa).

Belongs to the GTP cyclohydrolase IV family.

The catalysed reaction is GTP + H2O = 7,8-dihydroneopterin 3'-triphosphate + formate + H(+). Its pathway is cofactor biosynthesis; 7,8-dihydroneopterin triphosphate biosynthesis; 7,8-dihydroneopterin triphosphate from GTP: step 1/1. Its function is as follows. Converts GTP to 7,8-dihydroneopterin triphosphate. The chain is GTP cyclohydrolase FolE2 from Staphylococcus aureus (strain Mu50 / ATCC 700699).